The following is a 159-amino-acid chain: Ribosomal RNA large subunit methyltransferase H (159 aa).

Residues leucine 76, glycine 108, and 127–132 (FSKMTF) contribute to the S-adenosyl-L-methionine site.

This sequence belongs to the RNA methyltransferase RlmH family. Homodimer.

The protein localises to the cytoplasm. The enzyme catalyses pseudouridine(1915) in 23S rRNA + S-adenosyl-L-methionine = N(3)-methylpseudouridine(1915) in 23S rRNA + S-adenosyl-L-homocysteine + H(+). Specifically methylates the pseudouridine at position 1915 (m3Psi1915) in 23S rRNA. This is Ribosomal RNA large subunit methyltransferase H from Lachnospira eligens (strain ATCC 27750 / DSM 3376 / VPI C15-48 / C15-B4) (Eubacterium eligens).